Reading from the N-terminus, the 586-residue chain is CTP synthase 2 (586 aa).

The region spanning 300–554 is the Glutamine amidotransferase type-1 domain; that stretch reads SIALVGKYTK…LAATGNLNAY (255 aa). Residues Cys-399, His-526, and Glu-528 each act as for GATase activity in the active site. The tract at residues 563 to 586 is disordered; it reads SSDRYSDASDDSFSEPRIAELEIS. Residues Ser-568, Ser-571, and Ser-574 each carry the phosphoserine modification.

It belongs to the CTP synthase family.

The catalysed reaction is UTP + L-glutamine + ATP + H2O = CTP + L-glutamate + ADP + phosphate + 2 H(+). The protein operates within pyrimidine metabolism; CTP biosynthesis via de novo pathway; CTP from UDP: step 2/2. Its function is as follows. Catalyzes the ATP-dependent amination of UTP to CTP with either L-glutamine or ammonia as the source of nitrogen. Constitutes the rate-limiting enzyme in the synthesis of cytosine nucleotides. The polypeptide is CTP synthase 2 (CTPS2) (Homo sapiens (Human)).